The chain runs to 297 residues: Protein CANDIDATE G-PROTEIN COUPLED RECEPTOR 8 (297 aa).

N-linked (GlcNAc...) asparagine glycosylation occurs at Asn20. 7 helical membrane passes run 34–54, 70–90, 107–127, 142–162, 180–200, 215–235, and 242–262; these read GFLH…YLAY, IMIA…AWCC, LTLF…AFLF, FLIS…FLFG, WGLW…VFLM, FYNY…ASAF, and FGFW…LPLL.

Belongs to the UPF0359 family.

It localises to the membrane. In terms of biological role, G-protein coupled receptor. Plays a role in plants and microbes interactions. The sequence is that of Protein CANDIDATE G-PROTEIN COUPLED RECEPTOR 8 from Arabidopsis thaliana (Mouse-ear cress).